The sequence spans 111 residues: COX assembly mitochondrial protein (111 aa).

The 44-residue stretch at 39 to 82 (YKKCANFVQAMADCAKANGMKVFPTCDKQRDEMKSCLLFYQTDE) folds into the CHCH domain. 2 short sequence motifs (cx9C motif) span residues 42–52 (CANFVQAMADC) and 64–74 (CDKQRDEMKSC). 2 disulfides stabilise this stretch: cysteine 42/cysteine 74 and cysteine 52/cysteine 64.

Belongs to the CMC family.

It is found in the mitochondrion inner membrane. In terms of biological role, required for mitochondrial cytochrome c oxidase (COX) assembly and respiration. Binds copper. May be involved in copper trafficking and distribution to mitochondrial COX and SOD1. The chain is COX assembly mitochondrial protein (CMC1) from Saccharomyces cerevisiae (strain RM11-1a) (Baker's yeast).